The chain runs to 207 residues: Small ribosomal subunit protein uS4A (207 aa).

The region spanning 98–161 (RRLDNVVYRM…REHKRIKELA (64 aa)) is the S4 RNA-binding domain.

This sequence belongs to the universal ribosomal protein uS4 family. As to quaternary structure, part of the 30S ribosomal subunit. Contacts protein S5. The interaction surface between S4 and S5 is involved in control of translational fidelity.

In terms of biological role, one of the primary rRNA binding proteins, it binds directly to 16S rRNA where it nucleates assembly of the body of the 30S subunit. With S5 and S12 plays an important role in translational accuracy. This is Small ribosomal subunit protein uS4A from Symbiobacterium thermophilum (strain DSM 24528 / JCM 14929 / IAM 14863 / T).